A 901-amino-acid polypeptide reads, in one-letter code: Alanine--tRNA ligase (901 aa).

Zn(2+)-binding residues include His600, His604, Cys704, and His708.

Belongs to the class-II aminoacyl-tRNA synthetase family. Requires Zn(2+) as cofactor.

It is found in the cytoplasm. The enzyme catalyses tRNA(Ala) + L-alanine + ATP = L-alanyl-tRNA(Ala) + AMP + diphosphate. In terms of biological role, catalyzes the attachment of alanine to tRNA(Ala) in a two-step reaction: alanine is first activated by ATP to form Ala-AMP and then transferred to the acceptor end of tRNA(Ala). Also edits incorrectly charged Ser-tRNA(Ala) and Gly-tRNA(Ala) via its editing domain. This chain is Alanine--tRNA ligase, found in Ignicoccus hospitalis (strain KIN4/I / DSM 18386 / JCM 14125).